Consider the following 102-residue polypeptide: uncharacterized protein (102 aa).

Residues 29 to 52 traverse the membrane as a helical segment; sequence IGSTYFCFGGAIFILVAPLTNLVY.

It is found in the membrane. This is an uncharacterized protein from Saccharomyces cerevisiae (strain ATCC 204508 / S288c) (Baker's yeast).